Consider the following 175-residue polypeptide: Tumor necrosis factor receptor superfamily member 13C (175 aa).

Over 1–71 (MGARRLRVRS…EGSALRPDVA (71 aa)) the chain is Extracellular. One copy of the TNFR-Cys; truncated repeat lies at 21–38 (QCNQTECFDPLVRNCVSC). 2 disulfide bridges follow: C22/C35 and C27/C38. Residue N23 is glycosylated (N-linked (GlcNAc...) asparagine). Positions 29–34 (DPLVRN) are essential for TNFSF13B/TALL1/BAFF/BLyS binding. A helical; Signal-anchor for type III membrane protein transmembrane segment spans residues 72–92 (LLVGAPALLGLILALTLVGLV). Topologically, residues 93 to 175 (SLVSWRWRQQ…VTTKTAGPEQ (83 aa)) are cytoplasmic. Residues 124-175 (VPSSETPHASAPTWPPLKEDADSALPRHSVPVPATELGSTELVTTKTAGPEQ) form a disordered region. A compositionally biased stretch (polar residues) spans 160 to 175 (LGSTELVTTKTAGPEQ).

As to expression, highly expressed in spleen and testis; detected at lower levels in lung and thymus.

Its subcellular location is the membrane. Its function is as follows. B-cell receptor specific for TNFSF13B/TALL1/BAFF/BLyS. Promotes the survival of mature B-cells and the B-cell response. This chain is Tumor necrosis factor receptor superfamily member 13C (Tnfrsf13c), found in Mus musculus (Mouse).